The following is a 178-amino-acid chain: MARADKATAVADIAAQFKESTATLITEYRGLTVANLAELRRSLTGSATYAVAKNTLIKRAASEAGIEGLDELFVGPTAIAFVTGEPVDAAKAIKTFAKEHKALVIKGGYMDGHPLTVAEVERIADLESREVLLAKLAGAMKGNLAKAAGLFNAPASQLARLAAALQEKKACPGPDSAE.

It belongs to the universal ribosomal protein uL10 family. As to quaternary structure, part of the ribosomal stalk of the 50S ribosomal subunit. The N-terminus interacts with L11 and the large rRNA to form the base of the stalk. The C-terminus forms an elongated spine to which L12 dimers bind in a sequential fashion forming a multimeric L10(L12)X complex.

Functionally, forms part of the ribosomal stalk, playing a central role in the interaction of the ribosome with GTP-bound translation factors. The protein is Large ribosomal subunit protein uL10 of Mycobacterium tuberculosis (strain ATCC 25177 / H37Ra).